The primary structure comprises 132 residues: Ribosome-binding factor A (132 aa).

This sequence belongs to the RbfA family. In terms of assembly, monomer. Binds 30S ribosomal subunits, but not 50S ribosomal subunits or 70S ribosomes.

Its subcellular location is the cytoplasm. One of several proteins that assist in the late maturation steps of the functional core of the 30S ribosomal subunit. Associates with free 30S ribosomal subunits (but not with 30S subunits that are part of 70S ribosomes or polysomes). Required for efficient processing of 16S rRNA. May interact with the 5'-terminal helix region of 16S rRNA. The chain is Ribosome-binding factor A from Treponema denticola (strain ATCC 35405 / DSM 14222 / CIP 103919 / JCM 8153 / KCTC 15104).